The following is a 191-amino-acid chain: Lipid A 1-phosphatase (191 aa).

5 consecutive transmembrane segments (helical) span residues Leu22–Pro42, Phe60–Phe80, Gly117–Met137, Tyr145–Leu162, and Met164–Phe184.

The protein belongs to the lipid A LpxE 1-phosphatase family.

The protein localises to the cell inner membrane. The protein operates within bacterial outer membrane biogenesis; LPS lipid A biosynthesis. Removes the 1-phosphate group from tetra- and probably hexaacylated lipid A species. Absence of the 1-phosphate group renders the bacteria partially resistant to host-derived cationic antimicrobial peptides (CAMP), allowing it to camouflage itself from the host innate immune response, and plays a role in the long-term colonization of the host's stomach. In Helicobacter pylori (strain J99 / ATCC 700824) (Campylobacter pylori J99), this protein is Lipid A 1-phosphatase.